The chain runs to 410 residues: Serine hydroxymethyltransferase (410 aa).

(6S)-5,6,7,8-tetrahydrofolate contacts are provided by residues leucine 116 and 120–122 (GHL). An N6-(pyridoxal phosphate)lysine modification is found at lysine 225.

This sequence belongs to the SHMT family. Homodimer. Pyridoxal 5'-phosphate is required as a cofactor.

Its subcellular location is the cytoplasm. It carries out the reaction (6R)-5,10-methylene-5,6,7,8-tetrahydrofolate + glycine + H2O = (6S)-5,6,7,8-tetrahydrofolate + L-serine. Its pathway is one-carbon metabolism; tetrahydrofolate interconversion. It participates in amino-acid biosynthesis; glycine biosynthesis; glycine from L-serine: step 1/1. In terms of biological role, catalyzes the reversible interconversion of serine and glycine with tetrahydrofolate (THF) serving as the one-carbon carrier. This reaction serves as the major source of one-carbon groups required for the biosynthesis of purines, thymidylate, methionine, and other important biomolecules. Also exhibits THF-independent aldolase activity toward beta-hydroxyamino acids, producing glycine and aldehydes, via a retro-aldol mechanism. This Lacticaseibacillus casei (strain BL23) (Lactobacillus casei) protein is Serine hydroxymethyltransferase.